Reading from the N-terminus, the 284-residue chain is MKHLVVNIGDIQAANDLPFVLFGGMNVLESRDLAMRICEHYVTVTEKLGIPYVFKASFDKANRSSIHSYRGPGLDEGMKIFSELKAQFGVKVITDVHEAGQAQSVADVVDVIQLPAFLARQTDLVEAMARTGAVINVKKPQFISPGQVGNIVDKFREAGNHQVILCDRGSNFGYDNLVVDMLGFNVMKQVSGGCPVIFDVTHALQTRDPFGAASGGRRAQVSELARAGMAVGIAGLFIEAHPDPANAKCDGPSALPIAKLEPFLRQMKAIDELVKSFPELDTGH.

Belongs to the KdsA family.

It localises to the cytoplasm. The catalysed reaction is D-arabinose 5-phosphate + phosphoenolpyruvate + H2O = 3-deoxy-alpha-D-manno-2-octulosonate-8-phosphate + phosphate. It functions in the pathway carbohydrate biosynthesis; 3-deoxy-D-manno-octulosonate biosynthesis; 3-deoxy-D-manno-octulosonate from D-ribulose 5-phosphate: step 2/3. The protein operates within bacterial outer membrane biogenesis; lipopolysaccharide biosynthesis. This is 2-dehydro-3-deoxyphosphooctonate aldolase from Sodalis glossinidius (strain morsitans).